The following is a 232-amino-acid chain: 5'-methylthioadenosine/S-adenosylhomocysteine nucleosidase (232 aa).

The active-site Proton acceptor is the Glu12. Residues Gly78, Ile152, and 173-174 (ME) contribute to the substrate site. Catalysis depends on Asp197, which acts as the Proton donor.

This sequence belongs to the PNP/UDP phosphorylase family. MtnN subfamily. As to quaternary structure, homodimer.

The catalysed reaction is S-adenosyl-L-homocysteine + H2O = S-(5-deoxy-D-ribos-5-yl)-L-homocysteine + adenine. It carries out the reaction S-methyl-5'-thioadenosine + H2O = 5-(methylsulfanyl)-D-ribose + adenine. The enzyme catalyses 5'-deoxyadenosine + H2O = 5-deoxy-D-ribose + adenine. Its pathway is amino-acid biosynthesis; L-methionine biosynthesis via salvage pathway; S-methyl-5-thio-alpha-D-ribose 1-phosphate from S-methyl-5'-thioadenosine (hydrolase route): step 1/2. Functionally, catalyzes the irreversible cleavage of the glycosidic bond in both 5'-methylthioadenosine (MTA) and S-adenosylhomocysteine (SAH/AdoHcy) to adenine and the corresponding thioribose, 5'-methylthioribose and S-ribosylhomocysteine, respectively. Also cleaves 5'-deoxyadenosine, a toxic by-product of radical S-adenosylmethionine (SAM) enzymes, into 5-deoxyribose and adenine. Thus, is required for in vivo function of the radical SAM enzymes biotin synthase and lipoic acid synthase, that are inhibited by 5'-deoxyadenosine accumulation. This Klebsiella pneumoniae (strain 342) protein is 5'-methylthioadenosine/S-adenosylhomocysteine nucleosidase.